Consider the following 188-residue polypeptide: Protein GrpE 2 (188 aa).

A compositionally biased stretch (basic and acidic residues) spans 1–29 (MDNQEKKTNYQNTDKENDLEKNKEKKNDE). Positions 1–33 (MDNQEKKTNYQNTDKENDLEKNKEKKNDESIFQ) are disordered.

This sequence belongs to the GrpE family. As to quaternary structure, homodimer.

It is found in the cytoplasm. Functionally, participates actively in the response to hyperosmotic and heat shock by preventing the aggregation of stress-denatured proteins, in association with DnaK and GrpE. It is the nucleotide exchange factor for DnaK and may function as a thermosensor. Unfolded proteins bind initially to DnaJ; upon interaction with the DnaJ-bound protein, DnaK hydrolyzes its bound ATP, resulting in the formation of a stable complex. GrpE releases ADP from DnaK; ATP binding to DnaK triggers the release of the substrate protein, thus completing the reaction cycle. Several rounds of ATP-dependent interactions between DnaJ, DnaK and GrpE are required for fully efficient folding. In Buchnera aphidicola subsp. Schizaphis graminum (strain Sg), this protein is Protein GrpE 2.